Consider the following 103-residue polypeptide: Large ribosomal subunit protein bL21 (103 aa).

Belongs to the bacterial ribosomal protein bL21 family. In terms of assembly, part of the 50S ribosomal subunit. Contacts protein L20.

In terms of biological role, this protein binds to 23S rRNA in the presence of protein L20. This is Large ribosomal subunit protein bL21 from Haemophilus influenzae (strain ATCC 51907 / DSM 11121 / KW20 / Rd).